The sequence spans 1104 residues: Inhibitory regulator protein BUD2/CLA2 (1104 aa).

The residue at position 2 (S2) is an N-acetylserine. The 129-residue stretch at 316 to 444 (RSEYLSITGS…RYNKETRLPI (129 aa)) folds into the C2 domain. The Ras-GAP domain maps to 536–753 (AKIDGTVSRI…NDLLDYIDKM (218 aa)). S854 carries the post-translational modification Phosphoserine. The tract at residues 1027–1104 (NPKSSNKTSV…FKKKKETGGS (78 aa)) is disordered. 2 stretches are compositionally biased toward polar residues: residues 1029 to 1043 (KSSNKTSVHGTSSEN) and 1052 to 1069 (LPNSQGKGNLGNRFSPTK). Residues 1090–1104 (KLTRWFKKKKETGGS) are compositionally biased toward basic residues.

Stimulates the GTPase activity of BUD1/RSR1. Participates in the regulation of bud-site selection. The sequence is that of Inhibitory regulator protein BUD2/CLA2 (BUD2) from Saccharomyces cerevisiae (strain ATCC 204508 / S288c) (Baker's yeast).